We begin with the raw amino-acid sequence, 557 residues long: Formate--tetrahydrofolate ligase (557 aa).

65 to 72 contacts ATP; it reads TPAGEGKT.

It belongs to the formate--tetrahydrofolate ligase family.

It catalyses the reaction (6S)-5,6,7,8-tetrahydrofolate + formate + ATP = (6R)-10-formyltetrahydrofolate + ADP + phosphate. The protein operates within one-carbon metabolism; tetrahydrofolate interconversion. This is Formate--tetrahydrofolate ligase from Methylococcus capsulatus (strain ATCC 33009 / NCIMB 11132 / Bath).